A 180-amino-acid polypeptide reads, in one-letter code: Cell wall / vacuolar inhibitor of fructosidase 2 (180 aa).

An N-terminal signal peptide occupies residues Met1 to Ala23. An N-linked (GlcNAc...) asparagine glycan is attached at Asn26. Residues Cys35 and Cys44 are joined by a disulfide bond. Asn73 and Asn84 each carry an N-linked (GlcNAc...) asparagine glycan. Residues Cys101 and Cys141 are joined by a disulfide bond.

Belongs to the PMEI family. In terms of tissue distribution, mostly expressed at low levels in seedlings, stems, leaves and flowers (in all organs), and, to a lower extent, in roots and siliques.

It localises to the vacuole. Functionally, inhibits fructosidases from both cell wall (cell wall invertase CWI) and vacuoles (vacuolar invertase VI). In Arabidopsis thaliana (Mouse-ear cress), this protein is Cell wall / vacuolar inhibitor of fructosidase 2 (C/VIF2).